A 626-amino-acid chain; its full sequence is Basic helix-loop-helix ARNT-like protein 1 (626 aa).

The disordered stretch occupies residues 1–58 (MADQRMDISSTISDFMSPGPTDLLSGSLSTSGVDCNRKRKGSATDYQESMDTDKDDPH). A Phosphoserine; by GSK3-beta modification is found at Ser17. The segment covering 17–32 (SPGPTDLLSGSLSTSG) has biased composition (low complexity). Thr21 is subject to Phosphothreonine; by GSK3-beta. The Nuclear localization signal motif lies at 36-41 (NRKRKG). The bHLH domain maps to 72 to 125 (NAREAHSQIEKRRRDKMNSFIDELASLVPTCNAMSRKLDKLTVLRMAVQHMKTL). The residue at position 78 (Ser78) is a Phosphoserine. Ser90 bears the Phosphoserine; by CK2 mark. Positions 142-152 (LSDDELKHLIL) match the Nuclear export signal 1 motif. The region spanning 143–215 (SDDELKHLIL…EQLSSSDTAP (73 aa)) is the PAS 1 domain. A Glycyl lysine isopeptide (Lys-Gly) (interchain with G-Cter in SUMO2 and SUMO3) cross-link involves residue Lys252. Residue Lys259 forms a Glycyl lysine isopeptide (Lys-Gly) (interchain with G-Cter in SUMO); alternate linkage. Residue Lys259 forms a Glycyl lysine isopeptide (Lys-Gly) (interchain with G-Cter in SUMO2); alternate linkage. In terms of domain architecture, PAS 2 spans 326-396 (PQPVNGEIRV…ECHRQVLQTR (71 aa)). The Nuclear export signal 2 signature appears at 361-369 (LAYLPQELL). The 44-residue stretch at 401 to 444 (TNCYKFKIKDGSFITLRSRWFSFMNPWTKEVEYIVSTNTVVLAN) folds into the PAC domain. Disordered regions lie at residues 459–492 (SPHS…RAGA) and 511–595 (GSSP…SPSN). An interaction with CIART region spans residues 508 to 588 (RIRGSSPSSC…IGIDMIDNDQ (81 aa)). Positions 511–521 (GSSPSSCGSSP) are enriched in low complexity. Residue Lys538 is modified to N6-acetyllysine.

In terms of assembly, component of the circadian clock oscillator which includes the CRY1/2 proteins, CLOCK or NPAS2, BMAL1 or BMAL2, CSNK1D and/or CSNK1E, TIMELESS and the PER1/2/3 proteins. Forms a heterodimer with CLOCK. The CLOCK-BMAL1 heterodimer is required for E-box-dependent transactivation, for CLOCK nuclear translocation and degradation, and, for phosphorylation of both CLOCK and BMAL1. Part of a nuclear complex which also includes RACK1 and PRKCA; RACK1 and PRKCA are recruited to the complex in a circadian manner. Interacts with NPAS2. Interacts with EZH2. Interacts with SUMO3. Interacts with SIRT1. Interacts with AHR. Interacts with ID1, ID2 and ID3. Interacts with DDX4. Interacts with OGT. Interacts with EED and SUZ12. Interacts with MTA1. Interacts with CIART. Interacts with HSP90. Interacts with KAT2B and EP300. Interacts with BHLHE40/DEC1 and BHLHE41/DEC2. Interacts with RELB and the interaction is enhanced in the presence of CLOCK. Interacts with PER1, PER2, CRY1 and CRY2 and this interaction requires a translocation to the nucleus. Interaction of the CLOCK-BMAL1 heterodimer with PER or CRY inhibits transcription activation. Interaction of the CLOCK-BMAL1 with CRY1 is independent of DNA but with PER2 is off DNA. The CLOCK-BMAL1 heterodimer interacts with GSK3B. Interacts with KDM5A. Interacts with KMT2A; in a circadian manner. Interacts with UBE3A. Interacts with PRKCG. Interacts with MAGEL2. Interacts with NCOA2. Interacts with THRAP3. The CLOCK-BMAL1 heterodimer interacts with PASD1. Interacts with PASD1. Interacts with USP9X. Interacts with PIWIL2 (via PIWI domain). Interacts with HDAC3. Interacts with HNF4A. Ubiquitinated, leading to its proteasomal degradation. Deubiquitinated by USP9X. In terms of processing, O-glycosylated; contains O-GlcNAc. O-glycosylation by OGT prevents protein degradation by inhibiting ubiquitination. It also stabilizes the CLOCK-BMAL1 heterodimer thereby increasing CLOCK-BMAL1-mediated transcription of genes in the negative loop of the circadian clock such as PER1/2/3 and CRY1/2. Post-translationally, acetylated on Lys-538 by CLOCK during the repression phase of the circadian cycle. Acetylation facilitates recruitment of CRY1 protein and initiates the repression phase of the circadian cycle. Acetylated at Lys-538 by KAT5 during the activation phase of the cycle, leading to recruitment of the positive transcription elongation factor b (P-TEFb) and BRD4, followed by productive elongation of circadian transcripts. Deacetylated by SIRT1, which may result in decreased protein stability. Phosphorylated upon dimerization with CLOCK. Phosphorylation enhances the transcriptional activity, alters the subcellular localization and decreases the stability of the CLOCK-BMAL1 heterodimer by promoting its degradation. Phosphorylation shows circadian variations in the liver with a peak between CT10 to CT14. Phosphorylation at Ser-90 by CK2 is essential for its nuclear localization, its interaction with CLOCK and controls CLOCK nuclear entry. Dephosphorylation at Ser-78 is important for dimerization with CLOCK and transcriptional activity. In terms of processing, sumoylated on Lys-259 upon dimerization with CLOCK. Predominantly conjugated to poly-SUMO2/3 rather than SUMO1 and the level of these conjugates undergo rhythmic variation, peaking at CT9-CT12. Sumoylation localizes it exclusively to the PML body and promotes its ubiquitination in the PML body, ubiquitin-dependent proteasomal degradation and the transcriptional activity of the CLOCK-BMAL1 heterodimer. Post-translationally, undergoes lysosome-mediated degradation in a time-dependent manner in the liver.

Its subcellular location is the nucleus. The protein localises to the cytoplasm. It localises to the PML body. Its function is as follows. Transcriptional activator which forms a core component of the circadian clock. The circadian clock, an internal time-keeping system, regulates various physiological processes through the generation of approximately 24 hour circadian rhythms in gene expression, which are translated into rhythms in metabolism and behavior. It is derived from the Latin roots 'circa' (about) and 'diem' (day) and acts as an important regulator of a wide array of physiological functions including metabolism, sleep, body temperature, blood pressure, endocrine, immune, cardiovascular, and renal function. Consists of two major components: the central clock, residing in the suprachiasmatic nucleus (SCN) of the brain, and the peripheral clocks that are present in nearly every tissue and organ system. Both the central and peripheral clocks can be reset by environmental cues, also known as Zeitgebers (German for 'timegivers'). The predominant Zeitgeber for the central clock is light, which is sensed by retina and signals directly to the SCN. The central clock entrains the peripheral clocks through neuronal and hormonal signals, body temperature and feeding-related cues, aligning all clocks with the external light/dark cycle. Circadian rhythms allow an organism to achieve temporal homeostasis with its environment at the molecular level by regulating gene expression to create a peak of protein expression once every 24 hours to control when a particular physiological process is most active with respect to the solar day. Transcription and translation of core clock components (CLOCK, NPAS2, BMAL1, BMAL2, PER1, PER2, PER3, CRY1 and CRY2) plays a critical role in rhythm generation, whereas delays imposed by post-translational modifications (PTMs) are important for determining the period (tau) of the rhythms (tau refers to the period of a rhythm and is the length, in time, of one complete cycle). A diurnal rhythm is synchronized with the day/night cycle, while the ultradian and infradian rhythms have a period shorter and longer than 24 hours, respectively. Disruptions in the circadian rhythms contribute to the pathology of cardiovascular diseases, cancer, metabolic syndromes and aging. A transcription/translation feedback loop (TTFL) forms the core of the molecular circadian clock mechanism. Transcription factors, CLOCK or NPAS2 and BMAL1 or BMAL2, form the positive limb of the feedback loop, act in the form of a heterodimer and activate the transcription of core clock genes and clock-controlled genes (involved in key metabolic processes), harboring E-box elements (5'-CACGTG-3') within their promoters. The core clock genes: PER1/2/3 and CRY1/2 which are transcriptional repressors form the negative limb of the feedback loop and interact with the CLOCK|NPAS2-BMAL1|BMAL2 heterodimer inhibiting its activity and thereby negatively regulating their own expression. This heterodimer also activates nuclear receptors NR1D1/2 and RORA/B/G, which form a second feedback loop and which activate and repress BMAL1 transcription, respectively. BMAL1 positively regulates myogenesis and negatively regulates adipogenesis via the transcriptional control of the genes of the canonical Wnt signaling pathway. Plays a role in normal pancreatic beta-cell function; regulates glucose-stimulated insulin secretion via the regulation of antioxidant genes NFE2L2/NRF2 and its targets SESN2, PRDX3, CCLC and CCLM. Negatively regulates the mTORC1 signaling pathway; regulates the expression of MTOR and DEPTOR. Controls diurnal oscillations of Ly6C inflammatory monocytes; rhythmic recruitment of the PRC2 complex imparts diurnal variation to chemokine expression that is necessary to sustain Ly6C monocyte rhythms. Regulates the expression of HSD3B2, STAR, PTGS2, CYP11A1, CYP19A1 and LHCGR in the ovary and also the genes involved in hair growth. Plays an important role in adult hippocampal neurogenesis by regulating the timely entry of neural stem/progenitor cells (NSPCs) into the cell cycle and the number of cell divisions that take place prior to cell-cycle exit. Regulates the circadian expression of CIART and KLF11. The CLOCK-BMAL1 heterodimer regulates the circadian expression of SERPINE1/PAI1, VWF, B3, CCRN4L/NOC, NAMPT, DBP, MYOD1, PPARGC1A, PPARGC1B, SIRT1, GYS2, F7, NGFR, GNRHR, BHLHE40/DEC1, ATF4, MTA1, KLF10 and also genes implicated in glucose and lipid metabolism. Promotes rhythmic chromatin opening, regulating the DNA accessibility of other transcription factors. May play a role in spermatogenesis; contributes to the chromatoid body assembly and physiology. The NPAS2-BMAL1 heterodimer positively regulates the expression of MAOA, F7 and LDHA and modulates the circadian rhythm of daytime contrast sensitivity by regulating the rhythmic expression of adenylate cyclase type 1 (ADCY1) in the retina. The preferred binding motif for the CLOCK-BMAL1 heterodimer is 5'-CACGTGA-3', which contains a flanking adenine nucleotide at the 3-prime end of the canonical 6-nucleotide E-box sequence. CLOCK specifically binds to the half-site 5'-CAC-3', while BMAL1 binds to the half-site 5'-GTGA-3'. The CLOCK-BMAL1 heterodimer also recognizes the non-canonical E-box motifs 5'-AACGTGA-3' and 5'-CATGTGA-3'. Essential for the rhythmic interaction of CLOCK with ASS1 and plays a critical role in positively regulating CLOCK-mediated acetylation of ASS1. Plays a role in protecting against lethal sepsis by limiting the expression of immune checkpoint protein CD274 in macrophages in a PKM2-dependent manner. Regulates the diurnal rhythms of skeletal muscle metabolism via transcriptional activation of genes promoting triglyceride synthesis (DGAT2) and metabolic efficiency (COQ10B). The chain is Basic helix-loop-helix ARNT-like protein 1 from Rattus norvegicus (Rat).